The primary structure comprises 346 residues: tRNA N6-adenosine threonylcarbamoyltransferase (346 aa).

The Fe cation site is built by H111 and H115. Substrate contacts are provided by residues 134–138 (LVSGG), D167, G180, and N279. Position 307 (D307) interacts with Fe cation.

Belongs to the KAE1 / TsaD family. Requires Fe(2+) as cofactor.

It is found in the cytoplasm. The enzyme catalyses L-threonylcarbamoyladenylate + adenosine(37) in tRNA = N(6)-L-threonylcarbamoyladenosine(37) in tRNA + AMP + H(+). In terms of biological role, required for the formation of a threonylcarbamoyl group on adenosine at position 37 (t(6)A37) in tRNAs that read codons beginning with adenine. Is involved in the transfer of the threonylcarbamoyl moiety of threonylcarbamoyl-AMP (TC-AMP) to the N6 group of A37, together with TsaE and TsaB. TsaD likely plays a direct catalytic role in this reaction. In Burkholderia pseudomallei (strain K96243), this protein is tRNA N6-adenosine threonylcarbamoyltransferase.